Here is a 127-residue protein sequence, read N- to C-terminus: DNA-directed RNA polymerases I, II, and III subunit RPABC2 (127 aa).

Residues 1 to 32 are compositionally biased toward acidic residues; the sequence is MSDNEDNFDGDDFDDVEEDEGLDDLENAEEEG. A disordered region spans residues 1 to 52; the sequence is MSDNEDNFDGDDFDDVEEDEGLDDLENAEEEGQVNVEILPSGERPQANQKRI. Residue S2 is modified to N-acetylserine. S2 carries the phosphoserine; by CK2 modification.

It belongs to the archaeal Rpo6/eukaryotic RPB6 RNA polymerase subunit family. As to quaternary structure, component of the RNA polymerase I (Pol I), RNA polymerase II (Pol II) and RNA polymerase III (Pol III) complexes consisting of at least 13, 12 and 17 subunits, respectively. Pol I complex consists of a ten-subunit catalytic core composed of POLR1A/RPA1, POLR1B/RPA2, POLR1C/RPAC1, POLR1D/RPAC2, POLR1H/RPA12, POLR2E/RPABC1, POLR2F/RPABC2, POLR2H/RPABC3, POLR2K/RPABC4 and POLR2L/RPABC5; a mobile stalk subunit POLR1F/RPA43 protruding from the core and additional subunits homologous to general transcription factors POLR1E/RPA49 and POLR1G/RPA34. Part of Pol I pre-initiation complex (PIC), in which Pol I core assembles with RRN3 and promoter-bound UTBF and SL1/TIF-IB complex. Pol II complex contains a ten-subunit catalytic core composed of POLR2A/RPB1, POLR2B/RPB2, POLR2C/RPB3, POLR2I/RPB9, POLR2J/RPB11, POLR2E/RPABC1, POLR2F/RPABC2, POLR2H/RPABC3, POLR2K/RPABC4 and POLR2L/RPABC5 and a mobile stalk composed of two subunits POLR2D/RPB4 and POLR2G/RPB7. Part of Pol II(G) complex, in which Pol II core associates with an additional subunit POLR2M; unlike conventional Pol II, Pol II(G) functions as a transcriptional repressor. Part of TBP-based Pol II pre-initiation complex (PIC), in which Pol II core assembles with general transcription factors and other specific initiation factors including GTF2E1, GTF2E2, GTF2F1, GTF2F2, TCEA1, ERCC2, ERCC3, GTF2H2, GTF2H3, GTF2H4, GTF2H5, GTF2A1, GTF2A2, GTF2B and TBP; this large multi-subunit PIC complex mediates DNA unwinding and targets Pol II core to the transcription start site where the first phosphodiester bond forms. Pol III complex consists of a ten-subunit catalytic core composed of POLR3A/RPC1, POLR3B/RPC2, POLR1C/RPAC1, POLR1D/RPAC2, POLR3K/RPC10, POLR2E/RPABC1, POLR2F/RPABC2, POLR2H/RPABC3, POLR2K/RPABC4 and POLR2L/RPABC5; a mobile stalk composed of two subunits POLR3H/RPC8 and CRCP/RPC9, protruding from the core and functioning primarily in transcription initiation; and additional subunits homologous to general transcription factors of the RNA polymerase II machinery, POLR3C/RPC3-POLR3F/RPC6-POLR3G/RPC7 heterotrimer required for transcription initiation and POLR3D/RPC4-POLR3E/RPC5 heterodimer involved in both transcription initiation and termination.

It is found in the nucleus. The protein resides in the nucleolus. In terms of biological role, DNA-dependent RNA polymerase catalyzes the transcription of DNA into RNA using the four ribonucleoside triphosphates as substrates. Common component of RNA polymerases I, II, and III which synthesize ribosomal RNA precursors, mRNA precursors and many functional non-coding RNAs, and small RNAs, such as 5S rRNA and tRNAs, respectively. Pol II is the central component of the basal RNA polymerase II transcription machinery. Pols are composed of mobile elements that move relative to each other. In Pol II, POLR2F/RPABC2 is part of the clamp element and together with parts of POLR2A/RPB1 and POLR2B/RPB2 forms a pocket to which the POLR2D/RPB4-POLR2G/RPB7 subcomplex binds. This is DNA-directed RNA polymerases I, II, and III subunit RPABC2 (POLR2F) from Bos taurus (Bovine).